We begin with the raw amino-acid sequence, 292 residues long: Pyruvate formate-lyase 2-activating enzyme (292 aa).

One can recognise a Radical SAM core domain in the interval 33 to 287 (NDGEGIRTVV…REMAERAGLQ (255 aa)). [4Fe-4S] cluster-binding residues include Cys47, Cys51, and Cys54. 53 to 55 (WCA) serves as a coordination point for S-adenosyl-L-methionine. A 4Fe-4S ferredoxin-type domain is found at 62 to 96 (GKIQTVRREAKCLHCAKCLRDADECPSGAFERIGR). Residues Gly126, 175–177 (DLK), and His247 each bind S-adenosyl-L-methionine.

It belongs to the organic radical-activating enzymes family. Requires [4Fe-4S] cluster as cofactor.

It localises to the cytoplasm. The enzyme catalyses glycyl-[formate C-acetyltransferase] + reduced [flavodoxin] + S-adenosyl-L-methionine = glycin-2-yl radical-[formate C-acetyltransferase] + semiquinone [flavodoxin] + 5'-deoxyadenosine + L-methionine + H(+). Functionally, activation of pyruvate formate-lyase 2 under anaerobic conditions by generation of an organic free radical, using S-adenosylmethionine and reduced flavodoxin as cosubstrates to produce 5'-deoxy-adenosine. The polypeptide is Pyruvate formate-lyase 2-activating enzyme (pflC) (Escherichia coli (strain K12)).